A 476-amino-acid chain; its full sequence is Bifunctional protein HldE (476 aa).

The ribokinase stretch occupies residues Met1–Thr318. Residue Asn195–Glu198 participates in ATP binding. Asp264 is a catalytic residue. The cytidylyltransferase stretch occupies residues Met344 to Gly476.

It in the N-terminal section; belongs to the carbohydrate kinase PfkB family. In the C-terminal section; belongs to the cytidylyltransferase family. Homodimer.

The catalysed reaction is D-glycero-beta-D-manno-heptose 7-phosphate + ATP = D-glycero-beta-D-manno-heptose 1,7-bisphosphate + ADP + H(+). The enzyme catalyses D-glycero-beta-D-manno-heptose 1-phosphate + ATP + H(+) = ADP-D-glycero-beta-D-manno-heptose + diphosphate. Its pathway is nucleotide-sugar biosynthesis; ADP-L-glycero-beta-D-manno-heptose biosynthesis; ADP-L-glycero-beta-D-manno-heptose from D-glycero-beta-D-manno-heptose 7-phosphate: step 1/4. It functions in the pathway nucleotide-sugar biosynthesis; ADP-L-glycero-beta-D-manno-heptose biosynthesis; ADP-L-glycero-beta-D-manno-heptose from D-glycero-beta-D-manno-heptose 7-phosphate: step 3/4. The protein operates within bacterial outer membrane biogenesis; LPS core biosynthesis. Catalyzes the phosphorylation of D-glycero-D-manno-heptose 7-phosphate at the C-1 position to selectively form D-glycero-beta-D-manno-heptose-1,7-bisphosphate. In terms of biological role, catalyzes the ADP transfer from ATP to D-glycero-beta-D-manno-heptose 1-phosphate, yielding ADP-D-glycero-beta-D-manno-heptose. The protein is Bifunctional protein HldE of Vibrio vulnificus (strain YJ016).